Reading from the N-terminus, the 160-residue chain is Probable transcriptional regulator YgiV (160 aa).

Represses expression of mcbR. The chain is Probable transcriptional regulator YgiV (ygiV) from Escherichia coli O157:H7.